The chain runs to 569 residues: Serine/threonine-protein kinase gad8 (569 aa).

The interval 19-63 (GLNSGGSSFTRGLKNSTLSSTSSRKSSDEKSRKSSEDKRSPQSTV) is disordered. Positions 31–42 (LKNSTLSSTSSR) are enriched in low complexity. Positions 43–58 (KSSDEKSRKSSEDKRS) are enriched in basic and acidic residues. A C2 domain is found at 45–202 (SDEKSRKSSE…IVNKLTDEWV (158 aa)). Residues 230–485 (FELLKVVGKG…AQEIKNHPFF (256 aa)) enclose the Protein kinase domain. ATP-binding positions include 236 to 244 (VGKGSFGKV) and K259. D353 (proton acceptor) is an active-site residue. T387 carries the phosphothreonine; by ksg1 modification. The AGC-kinase C-terminal domain maps to 486–557 (DDIDWKKLCA…QRPTTIDTSD (72 aa)). 2 positions are modified to phosphoserine; by TORC2: S527 and S546.

Belongs to the protein kinase superfamily. AGC Ser/Thr protein kinase family. Phosphorylated by ksg1 and target of rapamycin complex 2 (TORC2), affecting the kinase activity of gad8 in a nutrient-dependent manner.

The catalysed reaction is L-seryl-[protein] + ATP = O-phospho-L-seryl-[protein] + ADP + H(+). The enzyme catalyses L-threonyl-[protein] + ATP = O-phospho-L-threonyl-[protein] + ADP + H(+). Functionally, involved in a signaling module for sexual development and cell growth under stressed conditions. Required for G1 arrest under nitrogen starvation and for growth at high temperature and osmolarity. The chain is Serine/threonine-protein kinase gad8 from Schizosaccharomyces pombe (strain 972 / ATCC 24843) (Fission yeast).